Reading from the N-terminus, the 106-residue chain is Ribonuclease P protein component 4 (106 aa).

Positions 62, 65, 88, and 91 each coordinate Zn(2+).

It belongs to the eukaryotic/archaeal RNase P protein component 4 family. Consists of a catalytic RNA component and at least 4-5 protein subunits. Zn(2+) is required as a cofactor.

Its subcellular location is the cytoplasm. It carries out the reaction Endonucleolytic cleavage of RNA, removing 5'-extranucleotides from tRNA precursor.. In terms of biological role, part of ribonuclease P, a protein complex that generates mature tRNA molecules by cleaving their 5'-ends. The polypeptide is Ribonuclease P protein component 4 (Methanocorpusculum labreanum (strain ATCC 43576 / DSM 4855 / Z)).